A 410-amino-acid polypeptide reads, in one-letter code: Centromere protein U (410 aa).

A disordered region spans residues M1–S72. A Nuclear localization signal motif is present at residues R4–T21. A compositionally biased stretch (basic residues) spans R28–R38. T73 carries the phosphothreonine; by PLK1 modification. The segment at S87 to H228 is disordered. Residues N101–I115 are compositionally biased toward polar residues. 6 positions are modified to phosphoserine: S105, S110, S114, S130, S133, and S135. Residues D138 to P149 are compositionally biased toward basic and acidic residues. Over residues P158 to E169 the composition is skewed to low complexity. K179 is covalently cross-linked (Glycyl lysine isopeptide (Lys-Gly) (interchain with G-Cter in SUMO2)). S186 carries the post-translational modification Phosphoserine. At T191 the chain carries Phosphothreonine. Residues T200 to S218 are compositionally biased toward basic residues. S224 carries the phosphoserine modification. The stretch at Q289–N352 forms a coiled coil. The Nuclear localization signal signature appears at K295–L312.

The protein belongs to the CENP-U/AME1 family. As to quaternary structure, component of the CENPA-NAC complex, at least composed of CENPA, CENPC, CENPH, CENPM, CENPN, CENPT and CENPU. The CENPA-NAC complex interacts with the CENPA-CAD complex, composed of CENPI, CENPK, CENPL, CENPO, CENPP, CENPQ, CENPR and CENPS. Interacts with MLF1. Post-translationally, phosphorylated by PLK1 at Thr-73, creating a self-tethering site that specifically interacts with the polo-box domain of PLK1. In terms of tissue distribution, expressed at high levels in glioblastoma cell lines. Up-regulated in GBM (glioblastoma multiforme) tumors. Significantly increased in both the tumor core as well as the contralateral striatum and cortex in gliomas.

It is found in the cytoplasm. The protein localises to the nucleus. Its subcellular location is the chromosome. The protein resides in the centromere. It localises to the kinetochore. Its function is as follows. Component of the CENPA-NAC (nucleosome-associated) complex, a complex that plays a central role in assembly of kinetochore proteins, mitotic progression and chromosome segregation. The CENPA-NAC complex recruits the CENPA-CAD (nucleosome distal) complex and may be involved in incorporation of newly synthesized CENPA into centromeres. Plays an important role in the correct PLK1 localization to the mitotic kinetochores. A scaffold protein responsible for the initial recruitment and maintenance of the kinetochore PLK1 population until its degradation. Involved in transcriptional repression. The sequence is that of Centromere protein U (Cenpu) from Rattus norvegicus (Rat).